The following is a 128-amino-acid chain: Sulfurtransferase TusD (128 aa).

The Cysteine persulfide intermediate role is filled by C78.

This sequence belongs to the DsrE/TusD family. As to quaternary structure, heterohexamer, formed by a dimer of trimers. The hexameric TusBCD complex contains 2 copies each of TusB, TusC and TusD. The TusBCD complex interacts with TusE.

The protein localises to the cytoplasm. Its function is as follows. Part of a sulfur-relay system required for 2-thiolation of 5-methylaminomethyl-2-thiouridine (mnm(5)s(2)U) at tRNA wobble positions. Accepts sulfur from TusA and transfers it in turn to TusE. This is Sulfurtransferase TusD from Salmonella newport (strain SL254).